The following is a 544-amino-acid chain: Glucans biosynthesis protein G 1 (544 aa).

Positions 1 to 33 (MVSLLRCQSFKPSSIICSLALSAAFALSGTAFA) are cleaved as a signal peptide. The segment at 36–58 (SKPAENKPATPVVSPPKATAPSA) is disordered.

Belongs to the OpgD/OpgG family.

The protein resides in the periplasm. Its pathway is glycan metabolism; osmoregulated periplasmic glucan (OPG) biosynthesis. In terms of biological role, involved in the biosynthesis of osmoregulated periplasmic glucans (OPGs). The protein is Glucans biosynthesis protein G 1 (opgG1) of Shewanella oneidensis (strain ATCC 700550 / JCM 31522 / CIP 106686 / LMG 19005 / NCIMB 14063 / MR-1).